The following is a 262-amino-acid chain: Lipoate-protein ligase A subunit 1 (262 aa).

The BPL/LPL catalytic domain occupies 30-226; the sequence is YGDKPILRFY…GFSETLHIDF (197 aa). ATP-binding residues include Arg-72, Gly-77, Tyr-80, Asp-85, Pro-132, and Lys-135. Mg(2+)-binding residues include Thr-137 and Asp-138. ATP is bound by residues Lys-145, Ala-149, and Ala-163. Lys-145 contacts (R)-lipoate. Ala-149 is a Mg(2+) binding site.

This sequence belongs to the LplA family. In terms of assembly, heterodimer composed of LplA and LplB.

The protein resides in the cytoplasm. The catalysed reaction is L-lysyl-[lipoyl-carrier protein] + (R)-lipoate + ATP = N(6)-[(R)-lipoyl]-L-lysyl-[lipoyl-carrier protein] + AMP + diphosphate + H(+). Its pathway is protein modification; protein lipoylation via exogenous pathway; protein N(6)-(lipoyl)lysine from lipoate: step 1/2. The protein operates within protein modification; protein lipoylation via exogenous pathway; protein N(6)-(lipoyl)lysine from lipoate: step 2/2. Its function is as follows. Part of a lipoate-protein ligase complex that catalyzes both the ATP-dependent activation of exogenously supplied lipoate to lipoyl-AMP and the transfer of the activated lipoyl onto the lipoyl domains of lipoate-dependent enzymes. Can also use octanoate as substrate. The polypeptide is Lipoate-protein ligase A subunit 1 (lplA) (Thermoplasma acidophilum (strain ATCC 25905 / DSM 1728 / JCM 9062 / NBRC 15155 / AMRC-C165)).